The sequence spans 503 residues: Probable cytosol aminopeptidase (503 aa).

Residues lysine 270 and aspartate 275 each coordinate Mn(2+). Lysine 282 is a catalytic residue. Residues aspartate 293, aspartate 352, and glutamate 354 each contribute to the Mn(2+) site. The active site involves arginine 356.

The protein belongs to the peptidase M17 family. Mn(2+) is required as a cofactor.

It is found in the cytoplasm. It carries out the reaction Release of an N-terminal amino acid, Xaa-|-Yaa-, in which Xaa is preferably Leu, but may be other amino acids including Pro although not Arg or Lys, and Yaa may be Pro. Amino acid amides and methyl esters are also readily hydrolyzed, but rates on arylamides are exceedingly low.. The enzyme catalyses Release of an N-terminal amino acid, preferentially leucine, but not glutamic or aspartic acids.. Functionally, presumably involved in the processing and regular turnover of intracellular proteins. Catalyzes the removal of unsubstituted N-terminal amino acids from various peptides. The polypeptide is Probable cytosol aminopeptidase (Pectobacterium atrosepticum (strain SCRI 1043 / ATCC BAA-672) (Erwinia carotovora subsp. atroseptica)).